Consider the following 348-residue polypeptide: Rhodopsin (348 aa).

Position 1 is an N-acetylmethionine (Met-1). Residues 1 to 36 (MNGTEGPNFYVPFSNKTGVVRSPFEFPQYYLAEPWQ) lie on the Extracellular side of the membrane. Asn-2 and Asn-15 each carry an N-linked (GlcNAc...) asparagine glycan. Residues 37–61 (FSMLAAYMFLLIVLGFPINFLTLYV) form a helical membrane-spanning segment. Residues 62–73 (TVQHKKLRTPLN) are Cytoplasmic-facing. Residues 74–96 (YILLNLAVADLFMVFGGFTTTLY) traverse the membrane as a helical segment. At 97–110 (TSLHGYFVFGPTGC) the chain is on the extracellular side. A disulfide bond links Cys-110 and Cys-187. A helical membrane pass occupies residues 111–133 (NLEGFFATLGGEIALWSLVVLAI). The 'Ionic lock' involved in activated form stabilization signature appears at 134 to 136 (ERY). At 134–152 (ERYVVVCKPMSNFRFGENH) the chain is on the cytoplasmic side. The helical transmembrane segment at 153–173 (AIMGVGFTWVMALACAAPPLV) threads the bilayer. Residues 174–202 (GWSRYIPEGMQCSCGIDYYTLKPEVNNES) are Extracellular-facing. Position 201 (Glu-201) interacts with Zn(2+). The chain crosses the membrane as a helical span at residues 203–224 (FVIYMFVVHFTIPMIVIFFCYG). The Cytoplasmic segment spans residues 225-252 (QLVFTVKEAAAQQQESATTQKAEKEVTR). A helical membrane pass occupies residues 253–274 (MVIIMVIAFLICWVPYASVAFY). Topologically, residues 275–286 (IFTHQGSNFGPI) are extracellular. Gln-279 provides a ligand contact to Zn(2+). The chain crosses the membrane as a helical span at residues 287-308 (FMTLPAFFAKAASIYNPVIYIM). Position 296 is an N6-(retinylidene)lysine (Lys-296). Over 309 to 348 (MNKQFRTCMITTLCCGKNPLGDDEVSASASKTETSQVAPA) the chain is Cytoplasmic. S-palmitoyl cysteine attachment occurs at residues Cys-322 and Cys-323. Residues 330–348 (DDEVSASASKTETSQVAPA) are interaction with SAG. Phosphoserine is present on residues Ser-334 and Ser-338. 2 positions are modified to phosphothreonine: Thr-340 and Thr-342. Ser-343 is subject to Phosphoserine.

The protein belongs to the G-protein coupled receptor 1 family. Opsin subfamily. Homodimer. May form a complex composed of RHO, GRK1 and RCVRN in a Ca(2+)-dependent manner; RCVRN prevents the interaction between GRK1 and RHO. Interacts with GRK1. Interacts (phosphorylated form) with SAG. Interacts with GNAT1. Interacts with GNAT3. SAG and G-proteins compete for a common binding site. Interacts with PRCD; the interaction promotes PRCD stability. Forms a complex with ASAP1 and ARF4. Forms a complex with ASAP1, RAB11A, Rabin8/RAB3IP, ARF4 and RAB11FIP3; the complex regulates Golgi-to-cilia rhodopsin/RHO transport in photoreceptors. In terms of processing, phosphorylated on some or all of the serine and threonine residues present in the C-terminal region. Post-translationally, contains one covalently linked retinal chromophore. Upon light absorption, the covalently bound 11-cis-retinal is converted to all-trans-retinal. After hydrolysis of the Schiff base and release of the covalently bound all-trans-retinal, active rhodopsin is regenerated by binding of a fresh molecule of 11-cis-retinal.

It localises to the membrane. It is found in the cell projection. The protein localises to the cilium. Its subcellular location is the photoreceptor outer segment. Functionally, photoreceptor required for image-forming vision at low light intensity. Required for photoreceptor cell viability after birth. Light-induced isomerization of 11-cis to all-trans retinal triggers a conformational change that activates signaling via G-proteins. Subsequent receptor phosphorylation mediates displacement of the bound G-protein alpha subunit by the arrestin SAG and terminates signaling. This chain is Rhodopsin (RHO), found in Phoca vitulina (Harbor seal).